A 150-amino-acid chain; its full sequence is Nucleoside diphosphate kinase (150 aa).

ATP contacts are provided by Lys-9, Phe-57, Arg-85, Thr-91, Arg-102, and Asn-112. Residue His-115 is the Pros-phosphohistidine intermediate of the active site.

This sequence belongs to the NDK family. In terms of assembly, homotetramer. Requires Mg(2+) as cofactor.

It is found in the cytoplasm. The catalysed reaction is a 2'-deoxyribonucleoside 5'-diphosphate + ATP = a 2'-deoxyribonucleoside 5'-triphosphate + ADP. It catalyses the reaction a ribonucleoside 5'-diphosphate + ATP = a ribonucleoside 5'-triphosphate + ADP. In terms of biological role, major role in the synthesis of nucleoside triphosphates other than ATP. The ATP gamma phosphate is transferred to the NDP beta phosphate via a ping-pong mechanism, using a phosphorylated active-site intermediate. The sequence is that of Nucleoside diphosphate kinase from Symbiobacterium thermophilum (strain DSM 24528 / JCM 14929 / IAM 14863 / T).